Here is a 558-residue protein sequence, read N- to C-terminus: Ribonuclease J (558 aa).

Residues His-81, His-83, Asp-85, His-86, His-148, and Asp-170 each coordinate Zn(2+). Residue 371 to 375 (HVSGH) participates in substrate binding. His-397 serves as a coordination point for Zn(2+).

This sequence belongs to the metallo-beta-lactamase superfamily. RNA-metabolizing metallo-beta-lactamase-like family. Bacterial RNase J subfamily. Homodimer, may be a subunit of the RNA degradosome. Zn(2+) serves as cofactor.

It is found in the cytoplasm. An RNase that has 5'-3' exonuclease and possibly endoonuclease activity. Involved in maturation of rRNA and in some organisms also mRNA maturation and/or decay. This Mycobacterium tuberculosis (strain CDC 1551 / Oshkosh) protein is Ribonuclease J.